We begin with the raw amino-acid sequence, 433 residues long: Serine--tRNA ligase (433 aa).

235–237 (TSE) contacts L-serine. 266-268 (RSE) contributes to the ATP binding site. Residue Glu-289 coordinates L-serine. 353–356 (EISS) contacts ATP. Ser-388 provides a ligand contact to L-serine.

The protein belongs to the class-II aminoacyl-tRNA synthetase family. Type-1 seryl-tRNA synthetase subfamily. As to quaternary structure, homodimer. The tRNA molecule binds across the dimer.

The protein resides in the cytoplasm. It catalyses the reaction tRNA(Ser) + L-serine + ATP = L-seryl-tRNA(Ser) + AMP + diphosphate + H(+). The catalysed reaction is tRNA(Sec) + L-serine + ATP = L-seryl-tRNA(Sec) + AMP + diphosphate + H(+). Its pathway is aminoacyl-tRNA biosynthesis; selenocysteinyl-tRNA(Sec) biosynthesis; L-seryl-tRNA(Sec) from L-serine and tRNA(Sec): step 1/1. Catalyzes the attachment of serine to tRNA(Ser). Is also able to aminoacylate tRNA(Sec) with serine, to form the misacylated tRNA L-seryl-tRNA(Sec), which will be further converted into selenocysteinyl-tRNA(Sec). This Burkholderia ambifaria (strain ATCC BAA-244 / DSM 16087 / CCUG 44356 / LMG 19182 / AMMD) (Burkholderia cepacia (strain AMMD)) protein is Serine--tRNA ligase.